Here is a 404-residue protein sequence, read N- to C-terminus: MSPSDVPINWKRNLTVTWLGCFLTGAAFSLVMPFLPLYVEQLGVTGHSALNMWSGLVFSITFLFSAIASPFWGGLADRKGRKIMLLRSALGMAIVMLLMGMAQNIWQFLILRALLGLLGGFIPNANALIATQAPRHKSGWALGTLSTGGVSGALLGPLAGGLLADHYGLRPVFFITASVLFICFLLTFFFIRENFLPVSKKEMLHVREVVASLKNPRLVLSLFVTTLIIQVATGSIAPILTLYVRELAGNVSNIAFISGMIASVPGVAALLSAPRLGKLGDRIGPEKILIVALIISVLLLIPMSFVQTPWQLALLRFLLGAADGALLPAVQTLLVYNSTNQIAGRIFSYNQSFRDIGNVTGPLMGAAISASYGFRAVFCVTAGVVLFNAIYSWNSLRRRRLAIE.

Helical transmembrane passes span 19–39 (LGCFLTGAAFSLVMPFLPLYV), 56–76 (LVFSITFLFSAIASPFWGGLA), 90–110 (LGMAIVMLLMGMAQNIWQFLI), 113–133 (ALLGLLGGFIPNANALIATQA), 144–164 (TLSTGGVSGALLGPLAGGLLA), 171–191 (PVFFITASVLFICFLLTFFFI), 222–242 (LFVTTLIIQVATGSIAPILTL), 254–274 (IAFISGMIASVPGVAALLSAP), 288–308 (ILIVALIISVLLLIPMSFVQT), 317–337 (FLLGAADGALLPAVQTLLVYN), and 376–396 (AVFCVTAGVVLFNAIYSWNSL).

This sequence belongs to the major facilitator superfamily. DHA1 family. MdtG (TC 2.A.1.2.20) subfamily.

It is found in the cell inner membrane. The sequence is that of Multidrug resistance protein MdtG from Salmonella paratyphi A (strain ATCC 9150 / SARB42).